Here is an 87-residue protein sequence, read N- to C-terminus: Small ribosomal subunit protein bS20 (87 aa).

Belongs to the bacterial ribosomal protein bS20 family.

Functionally, binds directly to 16S ribosomal RNA. In Geobacter sulfurreducens (strain ATCC 51573 / DSM 12127 / PCA), this protein is Small ribosomal subunit protein bS20.